Consider the following 409-residue polypeptide: Arginine deiminase (409 aa).

C399 serves as the catalytic Amidino-cysteine intermediate.

Belongs to the arginine deiminase family.

The protein resides in the cytoplasm. The catalysed reaction is L-arginine + H2O = L-citrulline + NH4(+). It participates in amino-acid degradation; L-arginine degradation via ADI pathway; carbamoyl phosphate from L-arginine: step 1/2. The protein is Arginine deiminase of Streptococcus pneumoniae (strain JJA).